Here is a 362-residue protein sequence, read N- to C-terminus: UDP-3-O-acylglucosamine N-acyltransferase 1 (362 aa).

His-258 (proton acceptor) is an active-site residue.

The protein belongs to the transferase hexapeptide repeat family. LpxD subfamily. Homotrimer.

It carries out the reaction a UDP-3-O-[(3R)-3-hydroxyacyl]-alpha-D-glucosamine + a (3R)-hydroxyacyl-[ACP] = a UDP-2-N,3-O-bis[(3R)-3-hydroxyacyl]-alpha-D-glucosamine + holo-[ACP] + H(+). It participates in bacterial outer membrane biogenesis; LPS lipid A biosynthesis. Functionally, catalyzes the N-acylation of UDP-3-O-acylglucosamine using 3-hydroxyacyl-ACP as the acyl donor. Is involved in the biosynthesis of lipid A, a phosphorylated glycolipid that anchors the lipopolysaccharide to the outer membrane of the cell. The sequence is that of UDP-3-O-acylglucosamine N-acyltransferase 1 from Nitrobacter winogradskyi (strain ATCC 25391 / DSM 10237 / CIP 104748 / NCIMB 11846 / Nb-255).